Consider the following 89-residue polypeptide: UPF0250 protein Bphy_0213 (89 aa).

It belongs to the UPF0250 family.

This chain is UPF0250 protein Bphy_0213, found in Paraburkholderia phymatum (strain DSM 17167 / CIP 108236 / LMG 21445 / STM815) (Burkholderia phymatum).